A 345-amino-acid chain; its full sequence is Small ribosomal subunit protein mS45 (345 aa).

Residues 1-27 constitute a mitochondrion transit peptide; that stretch reads MSYGLTGTSSKLRGTSSIFSWTQVRHF.

This sequence belongs to the mitochondrion-specific ribosomal protein mS45 family. As to quaternary structure, component of the mitochondrial small ribosomal subunit (mt-SSU). Mature yeast 74S mitochondrial ribosomes consist of a small (37S) and a large (54S) subunit. The 37S small subunit contains a 15S ribosomal RNA (15S mt-rRNA) and 34 different proteins. The 54S large subunit contains a 21S rRNA (21S mt-rRNA) and 46 different proteins.

It is found in the mitochondrion. In terms of biological role, component of the mitochondrial ribosome (mitoribosome), a dedicated translation machinery responsible for the synthesis of mitochondrial genome-encoded proteins, including at least some of the essential transmembrane subunits of the mitochondrial respiratory chain. The mitoribosomes are attached to the mitochondrial inner membrane and translation products are cotranslationally integrated into the membrane. In Saccharomyces cerevisiae (strain ATCC 204508 / S288c) (Baker's yeast), this protein is Small ribosomal subunit protein mS45 (MRPS35).